Here is a 740-residue protein sequence, read N- to C-terminus: Copalyl diphosphate synthase 2 (740 aa).

A substrate-binding site is contributed by lysine 154. 2 residues coordinate Mg(2+): aspartate 287 and aspartate 289. The DXDD motif motif lies at 287-290 (DADD). Lysine 373 contacts substrate.

Belongs to the terpene synthase family. It depends on Mg(2+) as a cofactor.

The enzyme catalyses (2E,6E,10E)-geranylgeranyl diphosphate = (+)-copalyl diphosphate. It participates in secondary metabolite biosynthesis; terpenoid biosynthesis. Monofunctional diterpene synthase converting geranylgeranyl diphosphate to copalyl diphosphate. The chain is Copalyl diphosphate synthase 2 (CPS2) from Selaginella moellendorffii (Spikemoss).